The primary structure comprises 437 residues: GTPase Der (437 aa).

2 consecutive EngA-type G domains span residues Pro3 to Glu168 and Ile178 to Arg353. GTP is bound by residues Gly9–Ser16, Asp56–Tyr60, Asn120–Asp123, Gly184–Ser191, Asp231–Leu235, and Asn296–Asp299. In terms of domain architecture, KH-like spans Gln354–Lys437.

This sequence belongs to the TRAFAC class TrmE-Era-EngA-EngB-Septin-like GTPase superfamily. EngA (Der) GTPase family. As to quaternary structure, associates with the 50S ribosomal subunit.

Its function is as follows. GTPase that plays an essential role in the late steps of ribosome biogenesis. This chain is GTPase Der, found in Chlorobaculum tepidum (strain ATCC 49652 / DSM 12025 / NBRC 103806 / TLS) (Chlorobium tepidum).